Here is an 84-residue protein sequence, read N- to C-terminus: Small ribosomal subunit protein bS16 (84 aa).

This sequence belongs to the bacterial ribosomal protein bS16 family.

This chain is Small ribosomal subunit protein bS16, found in Burkholderia multivorans (strain ATCC 17616 / 249).